The primary structure comprises 345 residues: Holliday junction branch migration complex subunit RuvB (345 aa).

A large ATPase domain (RuvB-L) region spans residues 1–183 (MTTQRLVSAA…FGIVHRLEFY (183 aa)). Residues Ile-22, Arg-23, Gly-64, Lys-67, Thr-68, Thr-69, 130-132 (EDY), Arg-173, Tyr-183, and Arg-220 each bind ATP. Position 68 (Thr-68) interacts with Mg(2+). The segment at 184–254 (SVEELSRIVA…VAGKALEMLD (71 aa)) is small ATPAse domain (RuvB-S). The head domain (RuvB-H) stretch occupies residues 257–345 (PNGFDQSDRR…NVNEELFGDE (89 aa)). DNA contacts are provided by Arg-293, Arg-312, and Arg-317.

This sequence belongs to the RuvB family. As to quaternary structure, homohexamer. Forms an RuvA(8)-RuvB(12)-Holliday junction (HJ) complex. HJ DNA is sandwiched between 2 RuvA tetramers; dsDNA enters through RuvA and exits via RuvB. An RuvB hexamer assembles on each DNA strand where it exits the tetramer. Each RuvB hexamer is contacted by two RuvA subunits (via domain III) on 2 adjacent RuvB subunits; this complex drives branch migration. In the full resolvosome a probable DNA-RuvA(4)-RuvB(12)-RuvC(2) complex forms which resolves the HJ.

The protein resides in the cytoplasm. It carries out the reaction ATP + H2O = ADP + phosphate + H(+). In terms of biological role, the RuvA-RuvB-RuvC complex processes Holliday junction (HJ) DNA during genetic recombination and DNA repair, while the RuvA-RuvB complex plays an important role in the rescue of blocked DNA replication forks via replication fork reversal (RFR). RuvA specifically binds to HJ cruciform DNA, conferring on it an open structure. The RuvB hexamer acts as an ATP-dependent pump, pulling dsDNA into and through the RuvAB complex. RuvB forms 2 homohexamers on either side of HJ DNA bound by 1 or 2 RuvA tetramers; 4 subunits per hexamer contact DNA at a time. Coordinated motions by a converter formed by DNA-disengaged RuvB subunits stimulates ATP hydrolysis and nucleotide exchange. Immobilization of the converter enables RuvB to convert the ATP-contained energy into a lever motion, pulling 2 nucleotides of DNA out of the RuvA tetramer per ATP hydrolyzed, thus driving DNA branch migration. The RuvB motors rotate together with the DNA substrate, which together with the progressing nucleotide cycle form the mechanistic basis for DNA recombination by continuous HJ branch migration. Branch migration allows RuvC to scan DNA until it finds its consensus sequence, where it cleaves and resolves cruciform DNA. In Methylococcus capsulatus (strain ATCC 33009 / NCIMB 11132 / Bath), this protein is Holliday junction branch migration complex subunit RuvB.